Here is a 388-residue protein sequence, read N- to C-terminus: Queuine tRNA-ribosyltransferase (388 aa).

The Proton acceptor role is filled by aspartate 90. Residues 90 to 94, aspartate 144, glutamine 205, and glycine 232 each bind substrate; that span reads DSGGF. An RNA binding region spans residues 263 to 269; sequence GVGTPED. The active-site Nucleophile is the aspartate 282. The tract at residues 287-291 is RNA binding; important for wobble base 34 recognition; it reads TRNAR. Cysteine 320, cysteine 322, cysteine 325, and histidine 351 together coordinate Zn(2+).

It belongs to the queuine tRNA-ribosyltransferase family. As to quaternary structure, homodimer. Within each dimer, one monomer is responsible for RNA recognition and catalysis, while the other monomer binds to the replacement base PreQ1. It depends on Zn(2+) as a cofactor.

The enzyme catalyses 7-aminomethyl-7-carbaguanine + guanosine(34) in tRNA = 7-aminomethyl-7-carbaguanosine(34) in tRNA + guanine. It functions in the pathway tRNA modification; tRNA-queuosine biosynthesis. In terms of biological role, catalyzes the base-exchange of a guanine (G) residue with the queuine precursor 7-aminomethyl-7-deazaguanine (PreQ1) at position 34 (anticodon wobble position) in tRNAs with GU(N) anticodons (tRNA-Asp, -Asn, -His and -Tyr). Catalysis occurs through a double-displacement mechanism. The nucleophile active site attacks the C1' of nucleotide 34 to detach the guanine base from the RNA, forming a covalent enzyme-RNA intermediate. The proton acceptor active site deprotonates the incoming PreQ1, allowing a nucleophilic attack on the C1' of the ribose to form the product. After dissociation, two additional enzymatic reactions on the tRNA convert PreQ1 to queuine (Q), resulting in the hypermodified nucleoside queuosine (7-(((4,5-cis-dihydroxy-2-cyclopenten-1-yl)amino)methyl)-7-deazaguanosine). This Campylobacter curvus (strain 525.92) protein is Queuine tRNA-ribosyltransferase.